Here is a 301-residue protein sequence, read N- to C-terminus: Mitochondrial carnitine/acylcarnitine carrier protein (301 aa).

Ala-2 bears the N-acetylalanine mark. Residues 2-12 (AEEPKPISPLK) lie on the Cytoplasmic side of the membrane. Solcar repeat units follow at residues 8 to 99 (ISPL…GKRL), 108 to 196 (LTYP…LKNL), and 207 to 293 (LSVP…PMKI). The helical transmembrane segment at 13 to 31 (NLLAGGFGGVCLVFVGHPL) threads the bilayer. Over 32–73 (DTVKVRLQTQPPSLPGQPPMYSGTIDCFRKTLFREGITGLYR) the chain is Mitochondrial matrix. Residues 74–93 (GMAAPIIGVTPMFAVCFFGF) traverse the membrane as a helical segment. Topologically, residues 94-112 (GLGKRLQQKSPEDELTYPQ) are cytoplasmic. A helical membrane pass occupies residues 113 to 131 (LFTAGMLSGVFTTGIMTPG). Over 132–170 (ERIKCLLQIQASSGKNKYSGTLDCAKKLYQEFGIRGFYK) the chain is Mitochondrial matrix. Residues Lys-148 and Lys-157 each carry the N6-acetyllysine modification. Lys-170 is modified (N6-acetyllysine; alternate). The residue at position 170 (Lys-170) is an N6-succinyllysine; alternate. Residues 171–190 (GTALTLMRDVPASGMYFMTY) form a helical membrane-spanning segment. Topologically, residues 191 to 211 (EWLKNLFTPQGKSVHDLSVPR) are cytoplasmic. The chain crosses the membrane as a helical span at residues 212–230 (VLVAGGFRGIFNWVVAIPP). Residues 231-267 (DVLKSRFQTAPPGKYPNGFRDVLRELIREEGVTSLYK) are Mitochondrial matrix-facing. Residues 268–287 (GFNAVMIRAFPANAACFLGF) form a helical membrane-spanning segment. The Cytoplasmic segment spans residues 288–301 (EIPMKILNWIAPNL).

This sequence belongs to the mitochondrial carrier (TC 2.A.29) family. In terms of processing, the N-terminus is blocked.

The protein resides in the mitochondrion inner membrane. It catalyses the reaction O-acetyl-(R)-carnitine(in) + (R)-carnitine(out) = O-acetyl-(R)-carnitine(out) + (R)-carnitine(in). The catalysed reaction is an O-acyl-(R)-carnitine(in) + (R)-carnitine(out) = an O-acyl-(R)-carnitine(out) + (R)-carnitine(in). It carries out the reaction O-propanoyl-(R)-carnitine(in) + (R)-carnitine(out) = O-propanoyl-(R)-carnitine(out) + (R)-carnitine(in). The enzyme catalyses O-hexadecanoyl-(R)-carnitine(in) + (R)-carnitine(out) = O-hexadecanoyl-(R)-carnitine(out) + (R)-carnitine(in). It catalyses the reaction O-octanoyl-(R)-carnitine(in) + (R)-carnitine(out) = O-octanoyl-(R)-carnitine(out) + (R)-carnitine(in). The catalysed reaction is (R)-carnitine(in) = (R)-carnitine(out). Its function is as follows. Mediates the electroneutral exchange of acylcarnitines (O-acyl-(R)-carnitine or L-acylcarnitine) of different acyl chain lengths (ranging from O-acetyl-(R)-carnitine to long-chain O-acyl-(R)-carnitines) with free carnitine ((R)-carnitine or L-carnitine) across the mitochondrial inner membrane, via a ping-pong mechanism. Key player in the mitochondrial oxidation pathway, it translocates the fatty acids in the form of acylcarnitines into the mitochondrial matrix, where the carnitine palmitoyltransferase 2 (CPT-2) activates them to undergo fatty acid beta-oxidation. Catalyzes the unidirectional transport (uniport) of carnitine at lower rates than the antiport (exchange). This is Mitochondrial carnitine/acylcarnitine carrier protein from Rattus norvegicus (Rat).